A 372-amino-acid chain; its full sequence is 12-oxophytodienoate reductase 1 (372 aa).

Position 1 is an N-acetylmethionine (methionine 1). Residues 31–33 (PLT), alanine 64, and glutamine 106 each bind FMN. Residue histidine 183 coordinates substrate. Residue tyrosine 188 is the Proton donor of the active site. FMN is bound at residue arginine 235. A substrate-binding site is contributed by arginine 275. Residues 303–305 (AGG) and 326–327 (GR) contribute to the FMN site.

This sequence belongs to the NADH:flavin oxidoreductase/NADH oxidase family. The cofactor is FMN. Mostly expressed in roots, also present in leaves, shoots and flowers. More abundant in cotyledons. In more details, expressed in peduncles, sepals, petals, around the abscission zone of siliques, maturing siliques and developing seeds.

The protein resides in the cytoplasm. The catalysed reaction is (1S,2S)-OPC-8 + NADP(+) = (9S,13S,15Z)-12-oxophyto-10,15-dienoate + NADPH + H(+). It functions in the pathway lipid metabolism; oxylipin biosynthesis. Its function is as follows. Specifically cleaves olefinic bonds in alpha,beta-unsaturated carbonyls and may be involved in detoxification or modification of these reactive compounds. May be involved in the biosynthesis or metabolism of oxylipin signaling molecules. In vitro, reduces 9R,13R-12-oxophytodienoic acid (9R,13R-OPDA) to 9R,13R-OPC-8:0, but only poorly 9S,13S-OPDA, the natural precursor of jasmonic acid. Can detoxify the explosive 2,4,6-trinitrotoluene (TNT) in vitro and in vivo by catalyzing its nitroreduction to form hydroxylamino-dinitrotoluene (HADNT). The protein is 12-oxophytodienoate reductase 1 of Arabidopsis thaliana (Mouse-ear cress).